The chain runs to 51 residues: Large ribosomal subunit protein bL33 (51 aa).

This sequence belongs to the bacterial ribosomal protein bL33 family.

This is Large ribosomal subunit protein bL33 from Alkalilimnicola ehrlichii (strain ATCC BAA-1101 / DSM 17681 / MLHE-1).